The chain runs to 238 residues: Transcription factor MYB27 (238 aa).

HTH myb-type domains lie at 6 to 58 (EETL…MNYL) and 59 to 113 (NPTL…RKKQ). The Nuclear localization signal motif lies at 31–38 (ERRWDSLA). DNA-binding regions (H-T-H motif) lie at residues 34 to 58 (WDSLAIVSGLKRSGKSCRLRWMNYL) and 86 to 109 (WSKIARRLPGRTDNEIKNYWRTHY).

It localises to the nucleus. In Arabidopsis thaliana (Mouse-ear cress), this protein is Transcription factor MYB27.